The chain runs to 1393 residues: DNA-directed RNA polymerase subunit beta' (1393 aa).

Cysteine 70, cysteine 72, cysteine 85, and cysteine 88 together coordinate Zn(2+). Mg(2+) is bound by residues aspartate 461, aspartate 463, and aspartate 465. Residues cysteine 804, cysteine 877, cysteine 884, and cysteine 887 each coordinate Zn(2+).

Belongs to the RNA polymerase beta' chain family. The RNAP catalytic core consists of 2 alpha, 1 beta, 1 beta' and 1 omega subunit. When a sigma factor is associated with the core the holoenzyme is formed, which can initiate transcription. Mg(2+) serves as cofactor. Requires Zn(2+) as cofactor.

The enzyme catalyses RNA(n) + a ribonucleoside 5'-triphosphate = RNA(n+1) + diphosphate. DNA-dependent RNA polymerase catalyzes the transcription of DNA into RNA using the four ribonucleoside triphosphates as substrates. The chain is DNA-directed RNA polymerase subunit beta' from Rhodospirillum rubrum (strain ATCC 11170 / ATH 1.1.1 / DSM 467 / LMG 4362 / NCIMB 8255 / S1).